The following is a 575-amino-acid chain: Hemagglutinin-neuraminidase (575 aa).

Residues 1-10 are compositionally biased toward basic and acidic residues; sequence MDGDRGKRDS. Positions 1–27 are disordered; that stretch reads MDGDRGKRDSYWSTSPSGSTTKPASGW. The Intravirion segment spans residues 1 to 37; sequence MDGDRGKRDSYWSTSPSGSTTKPASGWERSSKADTWL. The incorporation in virion stretch occupies residues 10–14; sequence SYWST. The segment covering 11-23 has biased composition (polar residues); the sequence is YWSTSPSGSTTKP. The chain crosses the membrane as a helical; Signal-anchor for type II membrane protein span at residues 38–58; that stretch reads LILSFTQWALSIATVIICIII. The interaction with F protein stretch occupies residues 59–140; that stretch reads SARQGYSMKE…RQELTQHCES (82 aa). Topologically, residues 59–575 are virion surface; it reads SARQGYSMKE…SIPKLCKAES (517 aa). Residue N77 is glycosylated (N-linked (GlcNAc...) asparagine; by host). 4 cysteine pairs are disulfide-bonded: C192–C216, C258–C271, C357–C469, and C463–C473. Positions 254–259 are involved in neuraminidase activity; the sequence is NRKSCS. 2 N-linked (GlcNAc...) asparagine; by host glycosylation sites follow: N499 and N511. C535 and C544 form a disulfide bridge.

Belongs to the paramyxoviruses hemagglutinin-neuraminidase family. Homotetramer; composed of disulfide-linked homodimers. Interacts with F protein trimer. N-glycosylated; glycans consist of a mixture of high mannose-type oligosaccharides and of complex-type oligosaccharides.

It localises to the virion membrane. The protein localises to the host cell membrane. It carries out the reaction Hydrolysis of alpha-(2-&gt;3)-, alpha-(2-&gt;6)-, alpha-(2-&gt;8)- glycosidic linkages of terminal sialic acid residues in oligosaccharides, glycoproteins, glycolipids, colominic acid and synthetic substrates.. Its function is as follows. Attaches the virus to sialic acid-containing cell receptors and thereby initiating infection. Binding of HN protein to the receptor induces a conformational change that allows the F protein to trigger virion/cell membranes fusion. Neuraminidase activity ensures the efficient spread of the virus by dissociating the mature virions from the neuraminic acid containing glycoproteins. The polypeptide is Hemagglutinin-neuraminidase (HN) (Sendai virus (strain Z) (SeV)).